The primary structure comprises 48 residues: uncharacterized protein (48 aa).

This is an uncharacterized protein from Acidianus convivator (ATV).